A 558-amino-acid polypeptide reads, in one-letter code: Ankyrin repeat protein OPG189 (558 aa).

ANK repeat units lie at residues 65 to 95 (YGEN…NINK), 169 to 205 (YGCT…DVDK), 209 to 239 (YGNT…NIDS), 243 to 272 (NRYT…NVNA), 276 to 304 (FGTT…ELEI), 339 to 368 (YNET…DFET), and 372 to 401 (SGCT…SLKI).

It belongs to the orthopoxvirus OPG189 protein family.

In terms of biological role, contributes to viral release without involving rearrangement of host actin. The sequence is that of Ankyrin repeat protein OPG189 (OPG189) from Homo sapiens (Human).